The sequence spans 100 residues: Nucleoid-associated protein Rcas_2292 (100 aa).

Belongs to the YbaB/EbfC family. Homodimer.

It is found in the cytoplasm. The protein resides in the nucleoid. Functionally, binds to DNA and alters its conformation. May be involved in regulation of gene expression, nucleoid organization and DNA protection. The sequence is that of Nucleoid-associated protein Rcas_2292 from Roseiflexus castenholzii (strain DSM 13941 / HLO8).